The following is a 602-amino-acid chain: Exopolysaccharide phosphotransferase SCO2594 (602 aa).

The segment at 251 to 271 (PRAGEDLDAGDGAAGGPRPGL) is disordered.

It belongs to the stealth family.

The chain is Exopolysaccharide phosphotransferase SCO2594 from Streptomyces coelicolor (strain ATCC BAA-471 / A3(2) / M145).